We begin with the raw amino-acid sequence, 490 residues long: Probable cytosol aminopeptidase (490 aa).

Positions 257 and 262 each coordinate Mn(2+). The active site involves K269. Mn(2+)-binding residues include D281, D341, and E343. R345 is a catalytic residue.

The protein belongs to the peptidase M17 family. Requires Mn(2+) as cofactor.

Its subcellular location is the cytoplasm. It catalyses the reaction Release of an N-terminal amino acid, Xaa-|-Yaa-, in which Xaa is preferably Leu, but may be other amino acids including Pro although not Arg or Lys, and Yaa may be Pro. Amino acid amides and methyl esters are also readily hydrolyzed, but rates on arylamides are exceedingly low.. The catalysed reaction is Release of an N-terminal amino acid, preferentially leucine, but not glutamic or aspartic acids.. Its function is as follows. Presumably involved in the processing and regular turnover of intracellular proteins. Catalyzes the removal of unsubstituted N-terminal amino acids from various peptides. In Prochlorococcus marinus (strain MIT 9312), this protein is Probable cytosol aminopeptidase.